A 548-amino-acid polypeptide reads, in one-letter code: Glucan 1,4-alpha-maltotetraohydrolase (548 aa).

The N-terminal stretch at 1 to 21 is a signal peptide; it reads MSHILRAAVLAAMLLPLPSMA. The Ca(2+) site is built by aspartate 22, glutamine 23, histidine 34, aspartate 37, and glutamate 38. 99-100 contributes to the substrate binding site; that stretch reads YF. Asparagine 137 serves as a coordination point for Ca(2+). A substrate-binding site is contributed by histidine 138. Cysteine 161 and cysteine 171 are oxidised to a cystine. Aspartate 172 and aspartate 175 together coordinate Ca(2+). 177–181 is a substrate binding site; that stretch reads FIGGD. Ca(2+) is bound at residue aspartate 183. Substrate is bound at residue arginine 212. Aspartate 214 (nucleophile) is an active-site residue. 217-218 is a binding site for substrate; it reads RG. Glycine 218 lines the Ca(2+) pocket. Cysteines 237 and 272 form a disulfide. The Proton donor role is filled by glutamate 240. 2 residues coordinate substrate: histidine 314 and glutamine 326. Positions 446–548 constitute a CBM20 domain; the sequence is GEPGALVSVS…SEGATTVGRL (103 aa). Over residues 529–542 the composition is skewed to polar residues; that stretch reads QGGANNSLTPSEGA. The tract at residues 529–548 is disordered; sequence QGGANNSLTPSEGATTVGRL.

This sequence belongs to the glycosyl hydrolase 13 family. In terms of assembly, monomer. The cofactor is Ca(2+).

It localises to the secreted. It carries out the reaction Hydrolysis of (1-&gt;4)-alpha-D-glucosidic linkages in amylaceous polysaccharides, to remove successive maltotetraose residues from the non-reducing chain ends.. Its pathway is glycan degradation; starch degradation. This is Glucan 1,4-alpha-maltotetraohydrolase (amyP) from Stutzerimonas stutzeri (Pseudomonas stutzeri).